A 365-amino-acid chain; its full sequence is Chorismate synthase (365 aa).

Positions 48 and 54 each coordinate NADP(+). FMN is bound by residues 125–127 (RAS), 237–238 (NA), Gly-277, 292–296 (KPTSS), and Arg-318.

It belongs to the chorismate synthase family. Homotetramer. FMNH2 is required as a cofactor.

The enzyme catalyses 5-O-(1-carboxyvinyl)-3-phosphoshikimate = chorismate + phosphate. It functions in the pathway metabolic intermediate biosynthesis; chorismate biosynthesis; chorismate from D-erythrose 4-phosphate and phosphoenolpyruvate: step 7/7. Catalyzes the anti-1,4-elimination of the C-3 phosphate and the C-6 proR hydrogen from 5-enolpyruvylshikimate-3-phosphate (EPSP) to yield chorismate, which is the branch point compound that serves as the starting substrate for the three terminal pathways of aromatic amino acid biosynthesis. This reaction introduces a second double bond into the aromatic ring system. The polypeptide is Chorismate synthase (Polaromonas sp. (strain JS666 / ATCC BAA-500)).